Consider the following 557-residue polypeptide: Membrane protein insertase YidC (557 aa).

5 helical membrane passes run 6 to 26, 219 to 239, 367 to 387, 437 to 457, and 514 to 534; these read TILW…WQVH, IGPF…IYTD, IVGN…LAFF, LGGC…YWVL, and MPIV…LYWV.

This sequence belongs to the OXA1/ALB3/YidC family. Type 1 subfamily. In terms of assembly, interacts with the Sec translocase complex via SecD. Specifically interacts with transmembrane segments of nascent integral membrane proteins during membrane integration.

The protein resides in the cell inner membrane. Its function is as follows. Required for the insertion and/or proper folding and/or complex formation of integral membrane proteins into the membrane. Involved in integration of membrane proteins that insert both dependently and independently of the Sec translocase complex, as well as at least some lipoproteins. Aids folding of multispanning membrane proteins. The sequence is that of Membrane protein insertase YidC from Polynucleobacter asymbioticus (strain DSM 18221 / CIP 109841 / QLW-P1DMWA-1) (Polynucleobacter necessarius subsp. asymbioticus).